The sequence spans 278 residues: Adenylate kinase (278 aa).

ATP is bound at residue 50–55; it reads GAGKGT. The segment at 70 to 99 is NMP; that stretch reads ATGDMLRAQVAKGTALGKQAKKIMNEGGLV. AMP is bound by residues T71, R76, 97 to 99, 126 to 129, and Q133; these read GLV and GFPR. Residues 167-204 form an LID region; the sequence is GRLVHPASGRSYHRIFNPPKDDMKDDITGEPLVQRSDD. ATP is bound by residues R168 and 177–178; that span reads SY. The AMP site is built by R201 and R212. Q240 is a binding site for ATP.

Belongs to the adenylate kinase family. AK2 subfamily. In terms of assembly, monomer.

It is found in the cytoplasm. The protein localises to the cytosol. The protein resides in the mitochondrion intermembrane space. It catalyses the reaction AMP + ATP = 2 ADP. Its function is as follows. Catalyzes the reversible transfer of the terminal phosphate group between ATP and AMP. Plays an important role in cellular energy homeostasis and in adenine nucleotide metabolism. Adenylate kinase activity is critical for regulation of the phosphate utilization and the AMP de novo biosynthesis pathways. The protein is Adenylate kinase (adk-1) of Neurospora crassa (strain ATCC 24698 / 74-OR23-1A / CBS 708.71 / DSM 1257 / FGSC 987).